The primary structure comprises 246 residues: Ribosomal RNA small subunit methyltransferase J (246 aa).

Residues 115-116 and Asp169 contribute to the S-adenosyl-L-methionine site; that span reads ER.

It belongs to the methyltransferase superfamily. RsmJ family.

It is found in the cytoplasm. The enzyme catalyses guanosine(1516) in 16S rRNA + S-adenosyl-L-methionine = N(2)-methylguanosine(1516) in 16S rRNA + S-adenosyl-L-homocysteine + H(+). Its function is as follows. Specifically methylates the guanosine in position 1516 of 16S rRNA. In Buchnera aphidicola subsp. Acyrthosiphon pisum (strain 5A), this protein is Ribosomal RNA small subunit methyltransferase J.